Reading from the N-terminus, the 135-residue chain is NADH-quinone oxidoreductase subunit A (135 aa).

Helical transmembrane passes span 9-29 (YFPILLQAVIAMGLAAGLLTV), 67-87 (VGMLFILFDIEAIFLYPWVVV), and 97-117 (LFGFYEMLTFVILILSGFFYI).

Belongs to the complex I subunit 3 family. As to quaternary structure, NDH-1 is composed of 14 different subunits. Subunits NuoA, H, J, K, L, M, N constitute the membrane sector of the complex.

It is found in the cell inner membrane. It catalyses the reaction a quinone + NADH + 5 H(+)(in) = a quinol + NAD(+) + 4 H(+)(out). Its function is as follows. NDH-1 shuttles electrons from NADH, via FMN and iron-sulfur (Fe-S) centers, to quinones in the respiratory chain. The immediate electron acceptor for the enzyme in this species is believed to be ubiquinone. Couples the redox reaction to proton translocation (for every two electrons transferred, four hydrogen ions are translocated across the cytoplasmic membrane), and thus conserves the redox energy in a proton gradient. This Solibacter usitatus (strain Ellin6076) protein is NADH-quinone oxidoreductase subunit A.